The chain runs to 161 residues: Urocortin-3 (161 aa).

An N-terminal signal peptide occupies residues 1 to 21 (MLMPVHFLLLLLLLLGGPRTG). Positions 22–118 (LPHKFYKAKP…QDTAKSPHRT (97 aa)) are excised as a propeptide. The interval 64-118 (SRDASSGEEEEGKEKKTFPISGARGGARGTRYRYVSQAQPRGKPRQDTAKSPHRT) is disordered. Position 157 is an isoleucine amide (Ile157).

Belongs to the sauvagine/corticotropin-releasing factor/urotensin I family. As to quaternary structure, binds with high affinity to CRF receptors 2-alpha and 2-beta.

Its subcellular location is the secreted. Suppresses food intake, delays gastric emptying and decreases heat-induced edema. Might represent an endogenous ligand for maintaining homeostasis after stress. The protein is Urocortin-3 (UCN3) of Homo sapiens (Human).